The chain runs to 351 residues: Hydroxymethylglutaryl-CoA synthase (351 aa).

Asp-30 serves as a coordination point for (3S)-3-hydroxy-3-methylglutaryl-CoA. The Proton donor/acceptor role is filled by Glu-82. Residues Cys-114, Ser-155, Thr-203, and His-236 each contribute to the (3S)-3-hydroxy-3-methylglutaryl-CoA site. Cys-114 acts as the Acyl-thioester intermediate in catalysis. His-236 serves as the catalytic Proton donor/acceptor. A CoA-binding site is contributed by Arg-241. (3S)-3-hydroxy-3-methylglutaryl-CoA contacts are provided by Arg-245, Asn-268, and Ser-298.

The protein belongs to the thiolase-like superfamily. Archaeal HMG-CoA synthase family. Interacts with acetoacetyl-CoA thiolase that catalyzes the precedent step in the pathway and with a DUF35 protein. The acetoacetyl-CoA thiolase/HMG-CoA synthase complex channels the intermediate via a fused CoA-binding site, which allows for efficient coupling of the endergonic thiolase reaction with the exergonic HMGCS reaction.

It catalyses the reaction acetoacetyl-CoA + acetyl-CoA + H2O = (3S)-3-hydroxy-3-methylglutaryl-CoA + CoA + H(+). It participates in metabolic intermediate biosynthesis; (R)-mevalonate biosynthesis; (R)-mevalonate from acetyl-CoA: step 2/3. Functionally, catalyzes the condensation of acetyl-CoA with acetoacetyl-CoA to form 3-hydroxy-3-methylglutaryl-CoA (HMG-CoA). Functions in the mevalonate (MVA) pathway leading to isopentenyl diphosphate (IPP), a key precursor for the biosynthesis of isoprenoid compounds that are building blocks of archaeal membrane lipids. This chain is Hydroxymethylglutaryl-CoA synthase, found in Pyrobaculum neutrophilum (strain DSM 2338 / JCM 9278 / NBRC 100436 / V24Sta) (Thermoproteus neutrophilus).